Reading from the N-terminus, the 198-residue chain is Putative coiled-coil domain-containing protein 196 (198 aa).

A coiled-coil region spans residues 24-117 (NYLKELNEDL…RKEMEMLWNK (94 aa)). Composition is skewed to basic and acidic residues over residues 135-144 (NKTDLQDGKA) and 154-167 (TKNE…EKGK). Residues 135 to 198 (NKTDLQDGKA…VSGTSQHHSE (64 aa)) form a disordered region. The segment covering 187–198 (GQVSGTSQHHSE) has biased composition (polar residues).

The polypeptide is Putative coiled-coil domain-containing protein 196 (Bos taurus (Bovine)).